Reading from the N-terminus, the 453-residue chain is Tol-Pal system protein TolB (453 aa).

A signal peptide spans 1 to 39; the sequence is MSFIPNTEAEALSALFSRRSVLGATAAGGLLATPLAAFA.

The protein belongs to the TolB family. In terms of assembly, the Tol-Pal system is composed of five core proteins: the inner membrane proteins TolA, TolQ and TolR, the periplasmic protein TolB and the outer membrane protein Pal. They form a network linking the inner and outer membranes and the peptidoglycan layer.

The protein localises to the periplasm. Functionally, part of the Tol-Pal system, which plays a role in outer membrane invagination during cell division and is important for maintaining outer membrane integrity. The protein is Tol-Pal system protein TolB of Gluconobacter oxydans (strain 621H) (Gluconobacter suboxydans).